We begin with the raw amino-acid sequence, 220 residues long: NADH-quinone oxidoreductase subunit I (220 aa).

2 consecutive 4Fe-4S ferredoxin-type domains span residues 71-102 (LQRL…IITH) and 112-141 (DSYT…MGNR). [4Fe-4S] cluster-binding residues include C82, C85, C88, C92, C121, C124, C127, and C131. The tract at residues 187–220 (MQATPLDYVQEPSKEESKEETPTNPESNKGDENV) is disordered. A compositionally biased stretch (basic and acidic residues) spans 198 to 207 (PSKEESKEET).

It belongs to the complex I 23 kDa subunit family. As to quaternary structure, NDH-1 is composed of 14 different subunits. Subunits NuoA, H, J, K, L, M, N constitute the membrane sector of the complex. Requires [4Fe-4S] cluster as cofactor.

Its subcellular location is the cell inner membrane. It carries out the reaction a quinone + NADH + 5 H(+)(in) = a quinol + NAD(+) + 4 H(+)(out). NDH-1 shuttles electrons from NADH, via FMN and iron-sulfur (Fe-S) centers, to quinones in the respiratory chain. The immediate electron acceptor for the enzyme in this species is believed to be ubiquinone. Couples the redox reaction to proton translocation (for every two electrons transferred, four hydrogen ions are translocated across the cytoplasmic membrane), and thus conserves the redox energy in a proton gradient. This is NADH-quinone oxidoreductase subunit I from Helicobacter pylori (strain Shi470).